The sequence spans 380 residues: Cytochrome b (380 aa).

4 helical membrane passes run Phe33 to Met53, Trp77 to Val98, Trp113 to Leu133, and Phe178 to Leu198. Heme b-binding residues include His83 and His97. Heme b-binding residues include His182 and His196. A ubiquinone is bound at residue His201. 4 consecutive transmembrane segments (helical) span residues Ile226–Phe246, Leu288–His308, Ile320–Gly340, and Phe347–Pro367.

It belongs to the cytochrome b family. In terms of assembly, the cytochrome bc1 complex contains 11 subunits: 3 respiratory subunits (MT-CYB, CYC1 and UQCRFS1), 2 core proteins (UQCRC1 and UQCRC2) and 6 low-molecular weight proteins (UQCRH/QCR6, UQCRB/QCR7, UQCRQ/QCR8, UQCR10/QCR9, UQCR11/QCR10 and a cleavage product of UQCRFS1). This cytochrome bc1 complex then forms a dimer. The cofactor is heme b.

The protein resides in the mitochondrion inner membrane. Its function is as follows. Component of the ubiquinol-cytochrome c reductase complex (complex III or cytochrome b-c1 complex) that is part of the mitochondrial respiratory chain. The b-c1 complex mediates electron transfer from ubiquinol to cytochrome c. Contributes to the generation of a proton gradient across the mitochondrial membrane that is then used for ATP synthesis. The chain is Cytochrome b (MT-CYB) from Microtus oregoni (Creeping vole).